A 386-amino-acid polypeptide reads, in one-letter code: Acetate kinase (386 aa).

Mg(2+) is bound at residue N9. K16 contributes to the ATP binding site. Position 74 (R74) interacts with substrate. The active-site Proton donor/acceptor is the D131. Residues 191 to 195 (HLGNG), 265 to 267 (DFR), and 313 to 317 (GVGEN) each bind ATP. E367 lines the Mg(2+) pocket.

The protein belongs to the acetokinase family. Homodimer. Requires Mg(2+) as cofactor. Mn(2+) is required as a cofactor.

The protein resides in the cytoplasm. It carries out the reaction acetate + ATP = acetyl phosphate + ADP. The protein operates within metabolic intermediate biosynthesis; acetyl-CoA biosynthesis; acetyl-CoA from acetate: step 1/2. Functionally, catalyzes the formation of acetyl phosphate from acetate and ATP. Can also catalyze the reverse reaction. In Mycolicibacterium gilvum (strain PYR-GCK) (Mycobacterium gilvum (strain PYR-GCK)), this protein is Acetate kinase.